The following is a 120-amino-acid chain: Photosystem II extrinsic protein U (120 aa).

The N-terminal stretch at 1 to 29 (MKRLLSLLTGVLVMTGLLMALIFPQSAYA) is a signal peptide.

The protein belongs to the PsbU family. PSII is composed of 1 copy each of membrane proteins PsbA, PsbB, PsbC, PsbD, PsbE, PsbF, PsbH, PsbI, PsbJ, PsbK, PsbL, PsbM, PsbT, PsbX, PsbY, Psb30/Ycf12, peripheral proteins PsbO, CyanoQ (PsbQ), PsbU, PsbV and a large number of cofactors. It forms dimeric complexes.

Its subcellular location is the cellular thylakoid membrane. Functionally, one of the extrinsic, lumenal subunits of photosystem II (PSII). PSII is a light-driven water plastoquinone oxidoreductase, using light energy to abstract electrons from H(2)O, generating a proton gradient subsequently used for ATP formation. The extrinsic proteins stabilize the structure of photosystem II oxygen-evolving complex (OEC), the ion environment of oxygen evolution and protect the OEC against heat-induced inactivation. This chain is Photosystem II extrinsic protein U, found in Prochlorococcus marinus (strain MIT 9303).